We begin with the raw amino-acid sequence, 777 residues long: Lon protease (777 aa).

The Lon N-terminal domain occupies 11–204 (IPVLPLRDVV…FLMAIMESEI (194 aa)). 356–363 (GPPGVGKT) is a binding site for ATP. A Lon proteolytic domain is found at 592–773 (TNQIGQVIGL…EEVLKLSLEK (182 aa)). Active-site residues include Ser-679 and Lys-722.

Belongs to the peptidase S16 family. As to quaternary structure, homohexamer. Organized in a ring with a central cavity.

The protein localises to the cytoplasm. The catalysed reaction is Hydrolysis of proteins in presence of ATP.. ATP-dependent serine protease that mediates the selective degradation of mutant and abnormal proteins as well as certain short-lived regulatory proteins. Required for cellular homeostasis and for survival from DNA damage and developmental changes induced by stress. Degrades polypeptides processively to yield small peptide fragments that are 5 to 10 amino acids long. Binds to DNA in a double-stranded, site-specific manner. This is Lon protease from Buchnera aphidicola subsp. Acyrthosiphon pisum (strain APS) (Acyrthosiphon pisum symbiotic bacterium).